The chain runs to 364 residues: Chorismate synthase (364 aa).

Residues R47 and R53 each coordinate NADP(+). FMN-binding positions include 124 to 126 (RSS), G286, 301 to 305 (KPTAT), and R327.

This sequence belongs to the chorismate synthase family. Homotetramer. The cofactor is FMNH2.

The catalysed reaction is 5-O-(1-carboxyvinyl)-3-phosphoshikimate = chorismate + phosphate. Its pathway is metabolic intermediate biosynthesis; chorismate biosynthesis; chorismate from D-erythrose 4-phosphate and phosphoenolpyruvate: step 7/7. Its function is as follows. Catalyzes the anti-1,4-elimination of the C-3 phosphate and the C-6 proR hydrogen from 5-enolpyruvylshikimate-3-phosphate (EPSP) to yield chorismate, which is the branch point compound that serves as the starting substrate for the three terminal pathways of aromatic amino acid biosynthesis. This reaction introduces a second double bond into the aromatic ring system. This chain is Chorismate synthase, found in Acaryochloris marina (strain MBIC 11017).